The sequence spans 505 residues: Putative heat shock protein HSP 90-beta 4 (505 aa).

3 residues coordinate ATP: asparagine 22, lysine 83, and phenylalanine 109. Residues 197–248 (EKEISDDEEEKGEKEEEDKDDKEKPKTEDVGSDEEDDTDKNNKKKTKKIKEK) form a disordered region. A compositionally biased stretch (acidic residues) spans 200–216 (ISDDEEEKGEKEEEDKD).

This sequence belongs to the heat shock protein 90 family. As to quaternary structure, homodimer.

The protein localises to the cytoplasm. Functionally, putative molecular chaperone that may promote the maturation, structural maintenance and proper regulation of specific target proteins. This chain is Putative heat shock protein HSP 90-beta 4 (HSP90AB4P), found in Homo sapiens (Human).